Here is a 473-residue protein sequence, read N- to C-terminus: Poly(A) polymerase catalytic subunit (473 aa).

Residues aspartate 193 and aspartate 195 contribute to the active site.

This sequence belongs to the poxviridae poly(A) polymerase catalytic subunit family. Heterodimer of a large (catalytic) subunit and a small (regulatory) subunit.

It carries out the reaction RNA(n) + ATP = RNA(n)-3'-adenine ribonucleotide + diphosphate. Functionally, polymerase that creates the 3'-poly(A) tail of mRNA's. The sequence is that of Poly(A) polymerase catalytic subunit (PAPL) from Crocodylus johnstoni (Australian freshwater crocodile).